Here is a 392-residue protein sequence, read N- to C-terminus: Formate-dependent phosphoribosylglycinamide formyltransferase (392 aa).

Residues 22–23 (EL) and E82 contribute to the N(1)-(5-phospho-beta-D-ribosyl)glycinamide site. ATP-binding positions include R114, K155, 160 to 165 (SSGKGQ), 195 to 198 (EKII), and E203. The region spanning 119-308 (VLVSKKLNIL…EFALHVRSFL (190 aa)) is the ATP-grasp domain. Residues E267 and E279 each coordinate Mg(2+). N(1)-(5-phospho-beta-D-ribosyl)glycinamide contacts are provided by residues D286, K355, and 362 to 363 (RR).

Belongs to the PurK/PurT family. As to quaternary structure, homodimer.

It carries out the reaction N(1)-(5-phospho-beta-D-ribosyl)glycinamide + formate + ATP = N(2)-formyl-N(1)-(5-phospho-beta-D-ribosyl)glycinamide + ADP + phosphate + H(+). Its pathway is purine metabolism; IMP biosynthesis via de novo pathway; N(2)-formyl-N(1)-(5-phospho-D-ribosyl)glycinamide from N(1)-(5-phospho-D-ribosyl)glycinamide (formate route): step 1/1. Its function is as follows. Involved in the de novo purine biosynthesis. Catalyzes the transfer of formate to 5-phospho-ribosyl-glycinamide (GAR), producing 5-phospho-ribosyl-N-formylglycinamide (FGAR). Formate is provided by PurU via hydrolysis of 10-formyl-tetrahydrofolate. In Wigglesworthia glossinidia brevipalpis, this protein is Formate-dependent phosphoribosylglycinamide formyltransferase.